We begin with the raw amino-acid sequence, 782 residues long: Endonuclease MutS2 (782 aa).

336–343 is an ATP binding site; the sequence is GPNTGGKT. Positions 707 to 782 constitute a Smr domain; sequence LDLRGYRYEE…GFGVTVAELK (76 aa).

It belongs to the DNA mismatch repair MutS family. MutS2 subfamily. Homodimer. Binds to stalled ribosomes, contacting rRNA.

In terms of biological role, endonuclease that is involved in the suppression of homologous recombination and thus may have a key role in the control of bacterial genetic diversity. Functionally, acts as a ribosome collision sensor, splitting the ribosome into its 2 subunits. Detects stalled/collided 70S ribosomes which it binds and splits by an ATP-hydrolysis driven conformational change. Acts upstream of the ribosome quality control system (RQC), a ribosome-associated complex that mediates the extraction of incompletely synthesized nascent chains from stalled ribosomes and their subsequent degradation. Probably generates substrates for RQC. In Staphylococcus epidermidis (strain ATCC 12228 / FDA PCI 1200), this protein is Endonuclease MutS2.